A 259-amino-acid chain; its full sequence is Aminoglycoside 3'-phosphotransferase (259 aa).

Asp187 functions as the Proton acceptor in the catalytic mechanism.

This sequence belongs to the aminoglycoside phosphotransferase family.

The catalysed reaction is kanamycin A + ATP = kanamycin 3'-phosphate + ADP + H(+). Resistance to kanamycin and structurally-related aminoglycosides, including amikacin. This chain is Aminoglycoside 3'-phosphotransferase (aphA-6), found in Acinetobacter baumannii.